The primary structure comprises 256 residues: L-erythrulose-1-phosphate isomerase (256 aa).

The Electrophile role is filled by His-96. The active-site Proton acceptor is the Glu-169. Substrate-binding residues include Gly-175 and Ser-212.

This sequence belongs to the triosephosphate isomerase family. In terms of assembly, homodimer.

It localises to the cytoplasm. It carries out the reaction L-erythrulose 1-phosphate = D-erythrulose 4-phosphate. It functions in the pathway carbohydrate metabolism; erythritol degradation. Functionally, catalyzes the isomerization of D-erythrulose-4P to L-erythrulose-1P. The polypeptide is L-erythrulose-1-phosphate isomerase (Brucella melitensis biotype 1 (strain ATCC 23456 / CCUG 17765 / NCTC 10094 / 16M)).